Consider the following 141-residue polypeptide: UPF0310 protein SGO_1818 (141 aa).

It belongs to the UPF0310 family.

The sequence is that of UPF0310 protein SGO_1818 from Streptococcus gordonii (strain Challis / ATCC 35105 / BCRC 15272 / CH1 / DL1 / V288).